Here is a 358-residue protein sequence, read N- to C-terminus: Tetraacyldisaccharide 4'-kinase (358 aa).

71–78 (IAGGAGKT) lines the ATP pocket.

Belongs to the LpxK family.

It carries out the reaction a lipid A disaccharide + ATP = a lipid IVA + ADP + H(+). Its pathway is glycolipid biosynthesis; lipid IV(A) biosynthesis; lipid IV(A) from (3R)-3-hydroxytetradecanoyl-[acyl-carrier-protein] and UDP-N-acetyl-alpha-D-glucosamine: step 6/6. Functionally, transfers the gamma-phosphate of ATP to the 4'-position of a tetraacyldisaccharide 1-phosphate intermediate (termed DS-1-P) to form tetraacyldisaccharide 1,4'-bis-phosphate (lipid IVA). In Methylibium petroleiphilum (strain ATCC BAA-1232 / LMG 22953 / PM1), this protein is Tetraacyldisaccharide 4'-kinase.